Here is a 177-residue protein sequence, read N- to C-terminus: NAD(P)H-quinone oxidoreductase subunit 6, chloroplastic (177 aa).

The next 5 helical transmembrane spans lie at 10–30 (ILVVFLGLVLILGGLGVVLFT), 33–53 (IYSAFSLGLVLICVSLFYILL), 61–81 (AQLLIYVGAINVLILFAVMFM), 92–112 (LWTVGDGVTSLVCTSILFLLI), and 152–172 (FFLPFELISIILLVALIGAIS).

The protein belongs to the complex I subunit 6 family. NDH is composed of at least 16 different subunits, 5 of which are encoded in the nucleus.

The protein localises to the plastid. It is found in the chloroplast thylakoid membrane. It carries out the reaction a plastoquinone + NADH + (n+1) H(+)(in) = a plastoquinol + NAD(+) + n H(+)(out). The enzyme catalyses a plastoquinone + NADPH + (n+1) H(+)(in) = a plastoquinol + NADP(+) + n H(+)(out). Its function is as follows. NDH shuttles electrons from NAD(P)H:plastoquinone, via FMN and iron-sulfur (Fe-S) centers, to quinones in the photosynthetic chain and possibly in a chloroplast respiratory chain. The immediate electron acceptor for the enzyme in this species is believed to be plastoquinone. Couples the redox reaction to proton translocation, and thus conserves the redox energy in a proton gradient. This Lemna minor (Common duckweed) protein is NAD(P)H-quinone oxidoreductase subunit 6, chloroplastic (ndhG).